A 908-amino-acid chain; its full sequence is Protein translocase subunit SecA (908 aa).

Residues Gln-87, 105–109, and Asp-494 contribute to the ATP site; that span reads GEGKT. The tract at residues 871–908 is disordered; sequence QEFSGGNLNRSQSNGSSVTVTTSSGGGTERKTSRRRKR. The span at 874-884 shows a compositional bias: polar residues; that stretch reads SGGNLNRSQSN.

The protein belongs to the SecA family. In terms of assembly, monomer and homodimer. Part of the essential Sec protein translocation apparatus which comprises SecA, SecYEG and auxiliary proteins SecDF. Other proteins may also be involved.

Its subcellular location is the cell inner membrane. The protein resides in the cytoplasm. It catalyses the reaction ATP + H2O + cellular proteinSide 1 = ADP + phosphate + cellular proteinSide 2.. Its function is as follows. Part of the Sec protein translocase complex. Interacts with the SecYEG preprotein conducting channel. Has a central role in coupling the hydrolysis of ATP to the transfer of proteins into and across the cell membrane, serving as an ATP-driven molecular motor driving the stepwise translocation of polypeptide chains across the membrane. This chain is Protein translocase subunit SecA, found in Leptospira interrogans serogroup Icterohaemorrhagiae serovar Lai (strain 56601).